Reading from the N-terminus, the 510-residue chain is MPLLNWSRHMVCLTAAGLITVPTVYATDTLTRDNGAVVGDNQNSQTAGAQGPVLLQDVQLLQKLQRFDRERIPERVVHARGTGVKGEFTASADISDLSKATVFKSGEKTPVFVRFSSVVHGNHSPETLRDPHGFATKFYTADGNWDLVGNNFPTFFIRDAIKFPDMVHAFKPDPRTNLDNDSRRFDFFSHVPEATRTLTLLYSNEGTPAGYRFMDGNGVHAYKLVNAKGEVHYVKFHWKSLQGIKNLDPKEVAQVQSKDYSHLTNDLVGAIKKGDFPKWDLYVQVLKPEELAKFDFDPLDATKIWPDVPEKKIGQMVLNKNVDNFFQETEQVAMAPANLVPGIEPSEDRLLQGRVFSYADTQMYRLGAIGLSLPVNQPKVAVNNGNQDGALNTGHTTSGVNYEPSRLEPRPADDKARYSELPLSGTTQQAKITREQNFKQAGDLFRSYSAKEKTDLVQRFGESLADTHTESKNIMLSVLYKEDRHYGTRVAEVAKGDLSKVKSLAASLKD.

The signal sequence occupies residues 1 to 26; it reads MPLLNWSRHMVCLTAAGLITVPTVYA. Catalysis depends on residues His-78 and Asn-150. Residue Tyr-358 coordinates heme. Residues 386-400 show a composition bias toward polar residues; the sequence is NQDGALNTGHTTSGV. Residues 386 to 412 form a disordered region; sequence NQDGALNTGHTTSGVNYEPSRLEPRPA.

This sequence belongs to the catalase family. The cofactor is heme.

The protein resides in the periplasm. It catalyses the reaction 2 H2O2 = O2 + 2 H2O. In terms of biological role, decomposes hydrogen peroxide into water and oxygen; serves to protect cells from the toxic effects of hydrogen peroxide. This is Catalase (katB) from Pseudomonas syringae pv. syringae.